Here is a 260-residue protein sequence, read N- to C-terminus: Acetylglutamate kinase (260 aa).

Substrate-binding positions include 45–46 (GG), arginine 67, and asparagine 159.

Belongs to the acetylglutamate kinase family. ArgB subfamily.

It is found in the cytoplasm. The catalysed reaction is N-acetyl-L-glutamate + ATP = N-acetyl-L-glutamyl 5-phosphate + ADP. The protein operates within amino-acid biosynthesis; L-arginine biosynthesis; N(2)-acetyl-L-ornithine from L-glutamate: step 2/4. Its function is as follows. Catalyzes the ATP-dependent phosphorylation of N-acetyl-L-glutamate. The chain is Acetylglutamate kinase from Colwellia psychrerythraea (strain 34H / ATCC BAA-681) (Vibrio psychroerythus).